A 254-amino-acid chain; its full sequence is Autophagy-related protein 5 (254 aa).

Residue Lys102 forms a Glycyl lysine isopeptide (Lys-Gly) (interchain with G-Cter in ATG12) linkage.

It belongs to the ATG5 family. Conjugated with ATG12. The ATG5-ATG12 conjugate forms a complex with several units of ATG16. The ATG12-ATG5 conjugate also associates with ATG3. Post-translationally, conjugated to ATG12; which is essential for autophagy. Conjugation with ATG12 involves ATG7 as an E1-like activating enzyme and ATG10 as an E2-like conjugating enzyme.

It is found in the preautophagosomal structure membrane. Functionally, involved in cytoplasm to vacuole transport (Cvt) and autophagic vesicle formation. Autophagy is essential for maintenance of amino acid levels and protein synthesis under nitrogen starvation. Required for selective autophagic degradation of the nucleus (nucleophagy). Also required for mitophagy, which eliminates defective or superfluous mitochondria in order to fulfill cellular energy requirements and prevent excess ROS production. Conjugation with ATG12, through a ubiquitin-like conjugating system involving ATG7 as an E1-like activating enzyme and ATG10 as an E2-like conjugating enzyme, is essential for its function. The ATG12-ATG5 conjugate acts as an E3-like enzyme which is required for lipidation of ATG8 and ATG8 association to the vesicle membranes. ATG12-ATG5 rearranges the ATG3 catalytic center and enhances its E2 activity. Autophagy is required for proper vegetative growth, asexual/sexual reproduction, and full virulence. Autophagy is particularly involved in the biosynthesis of deoxynivalenol (DON), an important virulence determinant. The chain is Autophagy-related protein 5 from Gibberella zeae (strain ATCC MYA-4620 / CBS 123657 / FGSC 9075 / NRRL 31084 / PH-1) (Wheat head blight fungus).